The primary structure comprises 913 residues: Protein translocase subunit SecA (913 aa).

ATP contacts are provided by residues Gln-87, 105 to 109 (GEGKT), and Asp-512. Residues 864-913 (LDQPEEEPAEVEGQPDVAVASVRTEPKIGRNEPCPCGSGKKYKHCHGQVQ) are disordered. Positions 897, 899, 908, and 909 each coordinate Zn(2+). Over residues 903 to 913 (KKYKHCHGQVQ) the composition is skewed to basic residues.

The protein belongs to the SecA family. In terms of assembly, monomer and homodimer. Part of the essential Sec protein translocation apparatus which comprises SecA, SecYEG and auxiliary proteins SecDF-YajC and YidC. Zn(2+) is required as a cofactor.

It localises to the cell inner membrane. The protein resides in the cytoplasm. The catalysed reaction is ATP + H2O + cellular proteinSide 1 = ADP + phosphate + cellular proteinSide 2.. Its function is as follows. Part of the Sec protein translocase complex. Interacts with the SecYEG preprotein conducting channel. Has a central role in coupling the hydrolysis of ATP to the transfer of proteins into and across the cell membrane, serving both as a receptor for the preprotein-SecB complex and as an ATP-driven molecular motor driving the stepwise translocation of polypeptide chains across the membrane. This chain is Protein translocase subunit SecA, found in Stutzerimonas stutzeri (strain A1501) (Pseudomonas stutzeri).